Consider the following 245-residue polypeptide: 1-(5-phosphoribosyl)-5-[(5-phosphoribosylamino)methylideneamino] imidazole-4-carboxamide isomerase (245 aa).

The Proton acceptor role is filled by Asp8. The Proton donor role is filled by Asp130.

It belongs to the HisA/HisF family.

It is found in the cytoplasm. The catalysed reaction is 1-(5-phospho-beta-D-ribosyl)-5-[(5-phospho-beta-D-ribosylamino)methylideneamino]imidazole-4-carboxamide = 5-[(5-phospho-1-deoxy-D-ribulos-1-ylimino)methylamino]-1-(5-phospho-beta-D-ribosyl)imidazole-4-carboxamide. Its pathway is amino-acid biosynthesis; L-histidine biosynthesis; L-histidine from 5-phospho-alpha-D-ribose 1-diphosphate: step 4/9. The chain is 1-(5-phosphoribosyl)-5-[(5-phosphoribosylamino)methylideneamino] imidazole-4-carboxamide isomerase from Teredinibacter turnerae (strain ATCC 39867 / T7901).